We begin with the raw amino-acid sequence, 237 residues long: uncharacterized protein (237 aa).

Positions 213–237 (GQGKYLKLDSNTTENKTTKQNETGG) are disordered. Residues 223 to 237 (NTTENKTTKQNETGG) are compositionally biased toward low complexity.

This is an uncharacterized protein from Methanothermobacter thermautotrophicus (Methanobacterium thermoformicicum).